The sequence spans 250 residues: Imidazole glycerol phosphate synthase subunit HisF (250 aa).

Active-site residues include aspartate 11 and aspartate 130.

This sequence belongs to the HisA/HisF family. As to quaternary structure, heterodimer of HisH and HisF.

It is found in the cytoplasm. It carries out the reaction 5-[(5-phospho-1-deoxy-D-ribulos-1-ylimino)methylamino]-1-(5-phospho-beta-D-ribosyl)imidazole-4-carboxamide + L-glutamine = D-erythro-1-(imidazol-4-yl)glycerol 3-phosphate + 5-amino-1-(5-phospho-beta-D-ribosyl)imidazole-4-carboxamide + L-glutamate + H(+). The protein operates within amino-acid biosynthesis; L-histidine biosynthesis; L-histidine from 5-phospho-alpha-D-ribose 1-diphosphate: step 5/9. Functionally, IGPS catalyzes the conversion of PRFAR and glutamine to IGP, AICAR and glutamate. The HisF subunit catalyzes the cyclization activity that produces IGP and AICAR from PRFAR using the ammonia provided by the HisH subunit. In Bacteroides fragilis (strain YCH46), this protein is Imidazole glycerol phosphate synthase subunit HisF.